The following is a 373-amino-acid chain: Transcription factor NF-E2 45 kDa subunit (373 aa).

The tract at residues 1–83 is required for interaction with MAPK8; sequence MSPCPPQQSR…SGFPLPPPPY (83 aa). Residues 1 to 206 are transactivation domain; that stretch reads MSPCPPQQSR…PAAETPLALE (206 aa). 2 consecutive short sequence motifs (PXY motif) follow at residues 61–65 and 79–83; these read PPTTY and PPPPY. A disordered region spans residues 127–150; the sequence is LDIGLPAGPPKPQEDPESDSGLSL. S157 is subject to Phosphoserine; by MAPK8. S170 carries the post-translational modification Phosphoserine; by PKA. Residues 205-226 form a disordered region; sequence LEPSSGPVRAKPTARGEAGSRD. Residues 266–329 form the bZIP domain; that stretch reads LVRDIRRRGK…EVMRQQLTEL (64 aa). Residues 268–287 form a basic motif region; sequence RDIRRRGKNKVAAQNCRKRK. Residues 291–298 are leucine-zipper; it reads IVQLEREL. K368 participates in a covalent cross-link: Glycyl lysine isopeptide (Lys-Gly) (interchain with G-Cter in SUMO1).

It belongs to the bZIP family. CNC subfamily. As to quaternary structure, homodimer; can bind DNA as a homodimer. Erythroid transcription activator nuclear factor erythroid-derived 2 (NF-E2), composed of a heterodimer of NFE2 and MAFK, possesses transactivation activity on beta-globin. Also forms high affinity heterodimer with MAFG; the interaction promotes erythropoiesis. Interacts (via the PXY motif 1) with ITCH (via the WW 1 domain); the interaction promotes 'Lys63'-linked ubiquitination of NFE2, translocates it to the cytoplasm and inhibits its transactivation activity. Interacts with KMT2D/MLL2; the interaction promotes transactivation of the beta-globin locus. Interacts with MAPK8 (phosphorylated form); the interaction leads to phosphorylation of NFE2 in undifferentiated cells. Post-translationally, phosphorylated on serine residues. In undifferentiated erythrocytes, phosphorylated by MAPK8 which then leads to ubiquitination and protein degradation. Sumoylated. Sumoylation is required for translocation to nuclear bodies PODs, anchoring to the gene loci, and transactivation of the beta-globin gene. In terms of processing, ubiquitinated mainly by 'Lys63'-linked ubiquitin. Polyubiquitination with 'Lys63'-linked ubiquitin by ITCH retains NFE2 in the cytoplasm preventing its transactivation activity. In undifferentiated erythrocyte, ubiquitinated after MAPK8-mediatd phosphorylation leading to protein degradation. In terms of tissue distribution, expressed in hematopoietic cells and also in colon and testis.

Its subcellular location is the nucleus. The protein resides in the PML body. The protein localises to the cytoplasm. Component of the NF-E2 complex essential for regulating erythroid and megakaryocytic maturation and differentiation. Binds to the hypersensitive site 2 (HS2) of the beta-globin control region (LCR). This subunit (NFE2) recognizes the TCAT/C sequence of the AP-1-like core palindrome present in a number of erythroid and megakaryocytic gene promoters. Requires MAFK or other small MAF proteins for binding to the NF-E2 motif. May play a role in all aspects of hemoglobin production from globin and heme synthesis to procurement of iron. This is Transcription factor NF-E2 45 kDa subunit (NFE2) from Homo sapiens (Human).